The chain runs to 2314 residues: Protein Ycf2 (2314 aa).

1653 to 1660 (GSIGTGRS) serves as a coordination point for ATP.

It belongs to the Ycf2 family.

The protein resides in the plastid. It localises to the chloroplast stroma. In terms of biological role, probable ATPase of unknown function. Its presence in a non-photosynthetic plant (Epifagus virginiana) and experiments in tobacco indicate that it has an essential function which is probably not related to photosynthesis. The chain is Protein Ycf2 from Piper cenocladum (Ant piper).